Consider the following 432-residue polypeptide: Trigger factor (432 aa).

The PPIase FKBP-type domain occupies 161 to 246 (EDRVTIDFTG…LKKVEERELP (86 aa)).

The protein belongs to the FKBP-type PPIase family. Tig subfamily.

It is found in the cytoplasm. The enzyme catalyses [protein]-peptidylproline (omega=180) = [protein]-peptidylproline (omega=0). In terms of biological role, involved in protein export. Acts as a chaperone by maintaining the newly synthesized protein in an open conformation. Functions as a peptidyl-prolyl cis-trans isomerase. The chain is Trigger factor from Klebsiella pneumoniae subsp. pneumoniae (strain ATCC 700721 / MGH 78578).